Here is a 236-residue protein sequence, read N- to C-terminus: UPF0173 metal-dependent hydrolase DSY1309 (236 aa).

It belongs to the UPF0173 family.

This Desulfitobacterium hafniense (strain Y51) protein is UPF0173 metal-dependent hydrolase DSY1309.